Here is a 193-residue protein sequence, read N- to C-terminus: Selenoprotein S A (193 aa).

A helical transmembrane segment spans residues 29-49; that stretch reads WALASYGWYILFGCIILYFLI. The span at 114–125 shows a compositional bias: basic and acidic residues; sequence IETWDRMQEGKS. The disordered stretch occupies residues 114-193; sequence IETWDRMQEG…RRGPSSGGUG (80 aa). A compositionally biased stretch (low complexity) spans 137-153; sequence SPSTSASSSPSTSSSAP. Residue Sec192 is a non-standard amino acid, selenocysteine.

Belongs to the selenoprotein S family.

It is found in the endoplasmic reticulum membrane. The protein resides in the cytoplasm. In terms of biological role, involved in the degradation process of misfolded endoplasmic reticulum (ER) luminal proteins. Participates in the transfer of misfolded proteins from the ER to the cytosol, where they are destroyed by the proteasome in a ubiquitin-dependent manner. In Xenopus laevis (African clawed frog), this protein is Selenoprotein S A (vimp-a).